The following is a 494-amino-acid chain: Tripartite motif-containing protein 5 (494 aa).

Ala2 bears the N-acetylalanine mark. The RING-type zinc-finger motif lies at Cys15–Arg59. Residues Gln91 to Val132 form a B box-type zinc finger. Positions 96, 99, 118, and 124 each coordinate Zn(2+). Residues Val132 to Val223 are a coiled coil. Positions Phe186–Asn199 are required for interaction with GABARAP and for autophagy. Positions Pro280–Ser494 constitute a B30.2/SPRY domain.

This sequence belongs to the TRIM/RBCC family. As to quaternary structure, can form homodimers and homotrimers. In addition to lower-order dimerization, also exhibits a higher-order multimerization and both low- and high-order multimerizations are essential for its restriction activity. Interacts with BTBD1 and BTBD2. Interacts with PSMC4, PSMC5, PSMD7 and HSPA8/HSC70. Interacts (via B30.2/SPRY domain) with HSPA1A/B. Interacts with PSMC2, MAP3K7/TAK1, TAB2 and TAB3. Interacts with SQSTM1. Interacts with TRIM6 and TRIM34. Interacts with ULK1 (phosphorylated form), GABARAP, GABARAPL1, GABARAPL2, MAP1LC3A, MAP1LC3C and BECN1. Post-translationally, degraded in a proteasome-independent fashion in the absence of viral infection but in a proteasome-dependent fashion following exposure to restriction sensitive virus. Autoubiquitinated in a RING finger- and UBE2D2-dependent manner. Monoubiquitinated by TRIM21. Deubiquitinated by Yersinia YopJ. Ubiquitination may not lead to proteasomal degradation.

Its subcellular location is the cytoplasm. The protein localises to the nucleus. It carries out the reaction S-ubiquitinyl-[E2 ubiquitin-conjugating enzyme]-L-cysteine + [acceptor protein]-L-lysine = [E2 ubiquitin-conjugating enzyme]-L-cysteine + N(6)-ubiquitinyl-[acceptor protein]-L-lysine.. It participates in protein modification; protein ubiquitination. Capsid-specific restriction factor that prevents infection from non-host-adapted retroviruses. Blocks viral replication early in the life cycle, after viral entry but before reverse transcription. In addition to acting as a capsid-specific restriction factor, also acts as a pattern recognition receptor that activates innate immune signaling in response to the retroviral capsid lattice. Binding to the viral capsid triggers its E3 ubiquitin ligase activity, and in concert with the heterodimeric ubiquitin conjugating enzyme complex UBE2V1-UBE2N (also known as UBC13-UEV1A complex) generates 'Lys-63'-linked polyubiquitin chains, which in turn are catalysts in the autophosphorylation of the MAP3K7/TAK1 complex (includes TAK1, TAB2, and TAB3). Activation of the MAP3K7/TAK1 complex by autophosphorylation results in the induction and expression of NF-kappa-B and MAPK-responsive inflammatory genes, thereby leading to an innate immune response in the infected cell. Restricts infection by simian immunodeficiency virus (SIV-mac). Plays a role in regulating autophagy through activation of autophagy regulator BECN1 by causing its dissociation from its inhibitors BCL2 and TAB2. The chain is Tripartite motif-containing protein 5 (TRIM5) from Saimiri sciureus (Common squirrel monkey).